Here is a 75-residue protein sequence, read N- to C-terminus: Antimicrobial peptide Meucin-49-1 (75 aa).

An N-terminal signal peptide occupies residues 1 to 22 (MNKKILLVIFIVTMLIVDEVNS).

The protein belongs to the non-disulfide-bridged peptide (NDBP) superfamily. Long chain multifunctional peptide (group 2) family. In terms of tissue distribution, expressed by the venom gland.

It localises to the secreted. Functionally, antimicrobial peptide. The protein is Antimicrobial peptide Meucin-49-1 of Mesobuthus eupeus (Lesser Asian scorpion).